Reading from the N-terminus, the 354-residue chain is Uroporphyrinogen decarboxylase (354 aa).

Residues 27–31 (RQAGR), Asp77, Tyr154, Ser209, and His327 each bind substrate.

This sequence belongs to the uroporphyrinogen decarboxylase family. Homodimer.

It localises to the cytoplasm. The catalysed reaction is uroporphyrinogen III + 4 H(+) = coproporphyrinogen III + 4 CO2. The protein operates within porphyrin-containing compound metabolism; protoporphyrin-IX biosynthesis; coproporphyrinogen-III from 5-aminolevulinate: step 4/4. Catalyzes the decarboxylation of four acetate groups of uroporphyrinogen-III to yield coproporphyrinogen-III. This Shewanella sp. (strain ANA-3) protein is Uroporphyrinogen decarboxylase.